A 507-amino-acid polypeptide reads, in one-letter code: Archaeal-type glutamate synthase [NADPH] (507 aa).

4Fe-4S ferredoxin-type domains follow at residues 10-39 (FVVERDDYKCIRCLACVRVCSYGANFYDEN) and 41-70 (NRVYTENTKCVGCHFCEAICPTEAITVRKN). Residues cysteine 19, cysteine 22, cysteine 25, cysteine 29, cysteine 50, cysteine 53, cysteine 56, and cysteine 60 each contribute to the [4Fe-4S] cluster site.

This sequence belongs to the glutamate synthase family. The cofactor is FMN.

The enzyme catalyses 2 L-glutamate + NADP(+) = L-glutamine + 2-oxoglutarate + NADPH + H(+). The chain is Archaeal-type glutamate synthase [NADPH] from Thermotoga maritima (strain ATCC 43589 / DSM 3109 / JCM 10099 / NBRC 100826 / MSB8).